Reading from the N-terminus, the 115-residue chain is UPF0127 protein PH1112 (115 aa).

The protein belongs to the UPF0127 family.

This Pyrococcus horikoshii (strain ATCC 700860 / DSM 12428 / JCM 9974 / NBRC 100139 / OT-3) protein is UPF0127 protein PH1112.